Reading from the N-terminus, the 144-residue chain is Galectin a (144 aa).

Residues 1-138 (DHIDLEFDVG…DAVLRKLCVV (138 aa)) enclose the Galectin domain.

In terms of assembly, tetramer.

Lectin that binds beta-galactoside and a wide array of complex carbohydrates. This is Galectin a from Aplysina lactuca (Marine sponge).